The following is a 557-amino-acid chain: Probable transcription factor sol4 (557 aa).

A fungal transcription factor domain region spans residues 26–186 (IQYFFEDINW…EREMRRRMFC (161 aa)). The tract at residues 463–490 (SGTQTRSMPSTETLTYNSSSSTSYGDGH) is disordered. Over residues 472–485 (STETLTYNSSSSTS) the composition is skewed to low complexity.

It is found in the nucleus. In terms of biological role, probable transcription factor that regulates the expression of the gene cluster that mediates the biosynthesis of the phytotoxin solanapyrone, a causal agent of early blight disease of potato and tomato. This chain is Probable transcription factor sol4 (sol4), found in Alternaria solani.